Consider the following 715-residue polypeptide: Phosphoribosylformylglycinamidine synthase subunit PurL (715 aa).

Residue histidine 33 is part of the active site. Residue tyrosine 36 coordinates ATP. Residue glutamate 77 participates in Mg(2+) binding. Substrate is bound by residues 78–81 (SHNH) and arginine 100. Histidine 79 serves as the catalytic Proton acceptor. Residue aspartate 101 coordinates Mg(2+). Glutamine 225 serves as a coordination point for substrate. Position 253 (aspartate 253) interacts with Mg(2+). 297–299 (ESQ) provides a ligand contact to substrate. Residues asparagine 475 and glycine 512 each coordinate ATP. Asparagine 513 serves as a coordination point for Mg(2+). Position 515 (serine 515) interacts with substrate.

It belongs to the FGAMS family. Monomer. Part of the FGAM synthase complex composed of 1 PurL, 1 PurQ and 2 PurS subunits.

It localises to the cytoplasm. It catalyses the reaction N(2)-formyl-N(1)-(5-phospho-beta-D-ribosyl)glycinamide + L-glutamine + ATP + H2O = 2-formamido-N(1)-(5-O-phospho-beta-D-ribosyl)acetamidine + L-glutamate + ADP + phosphate + H(+). The protein operates within purine metabolism; IMP biosynthesis via de novo pathway; 5-amino-1-(5-phospho-D-ribosyl)imidazole from N(2)-formyl-N(1)-(5-phospho-D-ribosyl)glycinamide: step 1/2. Its function is as follows. Part of the phosphoribosylformylglycinamidine synthase complex involved in the purines biosynthetic pathway. Catalyzes the ATP-dependent conversion of formylglycinamide ribonucleotide (FGAR) and glutamine to yield formylglycinamidine ribonucleotide (FGAM) and glutamate. The FGAM synthase complex is composed of three subunits. PurQ produces an ammonia molecule by converting glutamine to glutamate. PurL transfers the ammonia molecule to FGAR to form FGAM in an ATP-dependent manner. PurS interacts with PurQ and PurL and is thought to assist in the transfer of the ammonia molecule from PurQ to PurL. The polypeptide is Phosphoribosylformylglycinamidine synthase subunit PurL (Methanosarcina acetivorans (strain ATCC 35395 / DSM 2834 / JCM 12185 / C2A)).